Here is a 619-residue protein sequence, read N- to C-terminus: Isocitrate dehydrogenase kinase/phosphatase (619 aa).

ATP-binding positions include 354–360 (APGIRGM) and K375. D409 is an active-site residue.

It belongs to the AceK family.

Its subcellular location is the cytoplasm. The enzyme catalyses L-seryl-[isocitrate dehydrogenase] + ATP = O-phospho-L-seryl-[isocitrate dehydrogenase] + ADP + H(+). Its function is as follows. Bifunctional enzyme which can phosphorylate or dephosphorylate isocitrate dehydrogenase (IDH) on a specific serine residue. This is a regulatory mechanism which enables bacteria to bypass the Krebs cycle via the glyoxylate shunt in response to the source of carbon. When bacteria are grown on glucose, IDH is fully active and unphosphorylated, but when grown on acetate or ethanol, the activity of IDH declines drastically concomitant with its phosphorylation. The sequence is that of Isocitrate dehydrogenase kinase/phosphatase from Bordetella bronchiseptica (strain ATCC BAA-588 / NCTC 13252 / RB50) (Alcaligenes bronchisepticus).